Consider the following 333-residue polypeptide: T-cell surface glycoprotein CD1b-1 (333 aa).

The first 18 residues, 1–18, serve as a signal peptide directing secretion; it reads MLLLPLLLLAVIVPGGDN. Topologically, residues 19–302 are extracellular; it reads EDVFQGPTSF…LYWGHPTSTG (284 aa). N-linked (GlcNAc...) asparagine glycans are attached at residues Asn-38, Asn-75, Asn-146, and Asn-258. 2 disulfide bridges follow: Cys-120/Cys-184 and Cys-224/Cys-279. In terms of domain architecture, Ig-like spans 185-295; that stretch reads PRYFLSVLDA…LGDQDIVLYW (111 aa). The helical transmembrane segment at 303 to 323 threads the bilayer; it reads LIFVAIIVSSLILLICLALWF. At 324–333 the chain is on the cytoplasmic side; that stretch reads WRRWSYLTIL. The Internalization signal motif lies at 329–332; the sequence is YLTI.

In terms of assembly, heterodimer with B2M (beta-2-microglobulin). Interacts with saposin C.

The protein localises to the cell membrane. It localises to the endosome membrane. It is found in the lysosome membrane. Functionally, antigen-presenting protein that binds self and non-self lipid and glycolipid antigens and presents them to T-cell receptors on natural killer T-cells. This is T-cell surface glycoprotein CD1b-1 from Ovis aries (Sheep).